Reading from the N-terminus, the 356-residue chain is 3-dehydroquinate synthase (356 aa).

Residues 69 to 74, 103 to 107, 127 to 128, lysine 140, and lysine 149 contribute to the NAD(+) site; these read DGEQYK, GVVGD, and TT. Glutamate 182, histidine 245, and histidine 262 together coordinate Zn(2+).

This sequence belongs to the sugar phosphate cyclases superfamily. Dehydroquinate synthase family. Co(2+) serves as cofactor. It depends on Zn(2+) as a cofactor. The cofactor is NAD(+).

The protein localises to the cytoplasm. It carries out the reaction 7-phospho-2-dehydro-3-deoxy-D-arabino-heptonate = 3-dehydroquinate + phosphate. The protein operates within metabolic intermediate biosynthesis; chorismate biosynthesis; chorismate from D-erythrose 4-phosphate and phosphoenolpyruvate: step 2/7. Its function is as follows. Catalyzes the conversion of 3-deoxy-D-arabino-heptulosonate 7-phosphate (DAHP) to dehydroquinate (DHQ). The protein is 3-dehydroquinate synthase of Pseudoalteromonas translucida (strain TAC 125).